A 2961-amino-acid chain; its full sequence is Zinc finger ZZ-type and EF-hand domain-containing protein 1 (2961 aa).

Residues 1–41 are disordered; it reads MGNAPSHSSEDEAAAAGGEGWGPHQDWAAVSGTTPGPGVAA. The N-myristoyl glycine moiety is linked to residue Gly2. One can recognise an EF-hand domain in the interval 111–146; the sequence is CSSEQFEEAFAQFDAEGDGTVDAENMLEALKNSSGA. One can recognise a DOC domain in the interval 226–405; the sequence is LVQKEKESPG…AIWYWSLLTS (180 aa). 4 positions are modified to phosphoserine: Ser240, Ser1475, Ser1488, and Ser1509. Residues 1446–1531 form a disordered region; that stretch reads TADETSHLQP…PTRRPPFTRG (86 aa). Positions 1485 to 1502 are enriched in polar residues; sequence GDQSPGLGTQPKLPSSSG. The residue at position 1512 (Thr1512) is a Phosphothreonine. Residues 1516–1531 are compositionally biased toward low complexity; the sequence is PLSPSTPTRRPPFTRG. Residue Ser1518 is modified to Phosphoserine. Thr1521 and Thr1523 each carry phosphothreonine. Residues Ser1537 and Ser1540 each carry the phosphoserine modification. ZZ-type zinc fingers lie at residues 1778–1833 and 1827–1882; these read NVDI…FTCD and NMEF…MVTI. Zn(2+) is bound by residues Cys1783, Cys1786, Cys1797, Cys1800, Cys1806, Cys1809, His1819, His1823, Cys1832, Cys1835, Cys1846, Cys1849, Cys1855, Cys1858, His1868, and His1872. Disordered stretches follow at residues 1994 to 2078 and 2426 to 2455; these read AVQG…PSPE and LELD…KLDP. Positions 2009–2027 are enriched in basic and acidic residues; it reads AVHEEIRPVDFKQRNKADK. Residues 2033-2043 are compositionally biased toward polar residues; sequence KDPSCQTQISD. Basic and acidic residues predominate over residues 2426–2440; sequence LELDERGDREEEVER. The residue at position 2444 (Ser2444) is a Phosphoserine. The residue at position 2667 (Lys2667) is an N6-acetyllysine.

Interacts with KLF6 and KLF9. Interacts via (ZZ-type 2 zinc finger) with histone H3 trimethylated at 'Lys-4' (H3K4me3) and histone H3 acetylated at 'Lys-4' (H3K4ac). In terms of tissue distribution, expressed at low levels in cerebellum.

In terms of biological role, histone H3 reader which may act as a transcriptional coactivator for KLF6 and KLF9 transcription factors. The sequence is that of Zinc finger ZZ-type and EF-hand domain-containing protein 1 from Homo sapiens (Human).